A 173-amino-acid polypeptide reads, in one-letter code: Phosphopantetheine adenylyltransferase (173 aa).

Substrate is bound at residue Ser9. Residues Ser9–Phe10 and His17 each bind ATP. Substrate contacts are provided by Lys41, Thr73, and Arg87. ATP contacts are provided by residues Gly88–Arg90, Glu98, and Tyr123–Ser129.

Belongs to the bacterial CoaD family. Homohexamer. Mg(2+) serves as cofactor.

It localises to the cytoplasm. It carries out the reaction (R)-4'-phosphopantetheine + ATP + H(+) = 3'-dephospho-CoA + diphosphate. Its pathway is cofactor biosynthesis; coenzyme A biosynthesis; CoA from (R)-pantothenate: step 4/5. Its function is as follows. Reversibly transfers an adenylyl group from ATP to 4'-phosphopantetheine, yielding dephospho-CoA (dPCoA) and pyrophosphate. The chain is Phosphopantetheine adenylyltransferase from Limosilactobacillus reuteri (strain DSM 20016) (Lactobacillus reuteri).